A 214-amino-acid polypeptide reads, in one-letter code: Adenylate kinase (214 aa).

Position 10–15 (10–15) interacts with ATP; it reads GAGKGT. The NMP stretch occupies residues 30-59; that stretch reads STGDMFRAALKNQTPLGLKAKEYMDKGELV. Residues Thr31, Arg36, 57-59, 85-88, and Gln92 each bind AMP; these read ELV and GFPR. Residues 126–163 are LID; the sequence is GRRVCRQCGATYHVKFNPPKVEGVCDACGGELYQRSDD. Arg127 serves as a coordination point for ATP. Zn(2+) is bound by residues Cys130 and Cys133. 136 to 137 contacts ATP; that stretch reads TY. Residues Cys150 and Cys153 each coordinate Zn(2+). Residues Arg160 and Arg171 each contribute to the AMP site. Lys199 is an ATP binding site.

The protein belongs to the adenylate kinase family. Monomer.

The protein localises to the cytoplasm. The enzyme catalyses AMP + ATP = 2 ADP. It functions in the pathway purine metabolism; AMP biosynthesis via salvage pathway; AMP from ADP: step 1/1. Functionally, catalyzes the reversible transfer of the terminal phosphate group between ATP and AMP. Plays an important role in cellular energy homeostasis and in adenine nucleotide metabolism. In Carboxydothermus hydrogenoformans (strain ATCC BAA-161 / DSM 6008 / Z-2901), this protein is Adenylate kinase.